We begin with the raw amino-acid sequence, 161 residues long: S-ribosylhomocysteine lyase (161 aa).

Residues His57, His61, and Cys127 each coordinate Fe cation.

This sequence belongs to the LuxS family. As to quaternary structure, homodimer. The cofactor is Fe cation.

The enzyme catalyses S-(5-deoxy-D-ribos-5-yl)-L-homocysteine = (S)-4,5-dihydroxypentane-2,3-dione + L-homocysteine. Functionally, involved in the synthesis of autoinducer 2 (AI-2) which is secreted by bacteria and is used to communicate both the cell density and the metabolic potential of the environment. The regulation of gene expression in response to changes in cell density is called quorum sensing. Catalyzes the transformation of S-ribosylhomocysteine (RHC) to homocysteine (HC) and 4,5-dihydroxy-2,3-pentadione (DPD). This is S-ribosylhomocysteine lyase from Streptococcus equi subsp. zooepidemicus (strain H70).